The primary structure comprises 375 residues: Neutral protease 2 homolog MGYG_00813 (375 aa).

The signal sequence occupies residues 1–19; that stretch reads MQVIVALAALSSLAAPALG. A propeptide spanning residues 20–190 is cleaved from the precursor; it reads FSIPRGVPVS…SGPLTRIGKR (171 aa). Cystine bridges form between cysteine 198/cysteine 268 and cysteine 275/cysteine 293. Histidine 318 provides a ligand contact to Zn(2+). Residue glutamate 319 is part of the active site. Zn(2+) is bound by residues histidine 322 and aspartate 333.

The protein belongs to the peptidase M35 family. The cofactor is Zn(2+).

The protein resides in the secreted. The enzyme catalyses Preferential cleavage of bonds with hydrophobic residues in P1'. Also 3-Asn-|-Gln-4 and 8-Gly-|-Ser-9 bonds in insulin B chain.. Functionally, secreted metalloproteinase that allows assimilation of proteinaceous substrates. Shows high activities on basic nuclear substrates such as histone and protamine. May be involved in virulence. This Arthroderma gypseum (strain ATCC MYA-4604 / CBS 118893) (Microsporum gypseum) protein is Neutral protease 2 homolog MGYG_00813.